A 534-amino-acid polypeptide reads, in one-letter code: Serine protease vicPb (534 aa).

The first 17 residues, 1-17 (MLRYLLIPILYLQVVLG), serve as a signal peptide directing secretion. Residues Asn34, Asn65, and Asn126 are each glycosylated (N-linked (GlcNAc...) asparagine). The active-site Charge relay system is Ser174. N-linked (GlcNAc...) asparagine glycosylation is found at Asn297, Asn335, Asn352, Asn415, and Asn437. Asp451 serves as the catalytic Charge relay system.

The protein belongs to the peptidase S28 family.

The protein operates within mycotoxin biosynthesis. In terms of biological role, serine protease, part of the gene cluster that mediates the biosynthesis of the secondary metabolite victorin, the molecular basis for Victoria blight of oats. Within the pathway, vicPa and vicPb are probably involved in the processing of the vicA1 and vicA2 precursors. The pathway starts with the processing of the precursor vicA1 by several endopeptidases including kexin proteases as well as the cluster-specific S28 family peptidases vicPa and vicPb to produce 7 identical copies of the hexapeptide Gly-Leu-Lys-Leu-Ala-Phe. After being excised from the precursor peptide, the core peptides are cyclized and modified post-translationally by enzymes encoded within the gene cluster. The ustYa family oxidase vicYb is required for the formation of the macrocycle in victorin and the copper amine oxidases (CAOs) vicK1 and vicK2 are responsible for converting victorin to the active form by oxidizing the N-terminal glycyl residue in the peptides to glyoxylate. Relaxed substrate specificity of enzymes in the victorin biosynthetic pathway results in a metabolic grid that produces a set of analogs including victorinines B, C, E or HV-toxin M. The protein is Serine protease vicPb of Bipolaris victoriae (strain FI3) (Victoria blight of oats agent).